We begin with the raw amino-acid sequence, 247 residues long: Nodulation protein H (247 aa).

The segment at 1 to 16 (MTHSTLPPRPFAILAM) is hydrophobic.

In terms of biological role, required for the formation of sulfated nod factor. Proposed to transfer activated sulfate (PAPS) to a N-acetylglucosamine of the nod factor. This chain is Nodulation protein H (nodH), found in Rhizobium meliloti (Ensifer meliloti).